Here is a 244-residue protein sequence, read N- to C-terminus: Cell adhesion molecule CEACAM4 (244 aa).

Residues 1–35 form the signal peptide; the sequence is MGPPSAAPRGGHRPWQGLLITASLLTFWHPPTTVQ. An Ig-like V-type domain is found at 36 to 139; sequence FTIEALPSSA…DSDQATGQLH (104 aa). Residues 36–155 lie on the Extracellular side of the membrane; it reads FTIEALPSSA…PGLPVGAVAG (120 aa). Asn57, Asn104, Asn111, and Asn126 each carry an N-linked (GlcNAc...) asparagine glycan. A helical membrane pass occupies residues 156 to 176; sequence IVTGVLVGVALVAALVCFLLL. Residues 177-244 lie on the Cytoplasmic side of the membrane; sequence SRTGRASIQR…QIDHKADVVS (68 aa). The tract at residues 186 to 215 is disordered; that stretch reads RDLREQPPPASTPGHGPSHRSTFSAPLPSP. The ITAM signature appears at 222–236; the sequence is YEELLYSDANIYCQI.

Belongs to the immunoglobulin superfamily. CEA family. In terms of assembly, interacts through its phosphorylated ITAM domain with the SH2 domain-containing cytoplasmic proteins involved in signaling processes during phagocytosis. Post-translationally, N-glycosylated. In terms of processing, the cytoplasmic ITAM-like sequence becomes tyrosine phosphorylated by SRC family PTKs upon ligand-mediated receptor clustering and allows to initiate phagocytosis of bound ligand. In terms of tissue distribution, granulocytes.

It localises to the membrane. Functionally, granulocyte orphan receptor that acts as an trigger efficient phagocytosis of attached particles. This Homo sapiens (Human) protein is Cell adhesion molecule CEACAM4.